The primary structure comprises 441 residues: Homogentisate 1,2-dioxygenase (441 aa).

H287 functions as the Proton acceptor in the catalytic mechanism. Fe cation-binding residues include H330 and E336. Homogentisate-binding residues include Y345 and H366. A Fe cation-binding site is contributed by H366.

The protein belongs to the homogentisate dioxygenase family. Hexamer; dimer of trimers. It depends on Fe cation as a cofactor.

It catalyses the reaction homogentisate + O2 = 4-maleylacetoacetate + H(+). Its pathway is amino-acid degradation; L-phenylalanine degradation; acetoacetate and fumarate from L-phenylalanine: step 4/6. Functionally, involved in the catabolism of homogentisate (2,5-dihydroxyphenylacetate or 2,5-OH-PhAc), a central intermediate in the degradation of phenylalanine and tyrosine. Catalyzes the oxidative ring cleavage of the aromatic ring of homogentisate to yield maleylacetoacetate. The polypeptide is Homogentisate 1,2-dioxygenase (Xanthomonas oryzae pv. oryzae (strain KACC10331 / KXO85)).